The primary structure comprises 189 residues: Large ribosomal subunit protein bL9 (189 aa).

Belongs to the bacterial ribosomal protein bL9 family.

In terms of biological role, binds to the 23S rRNA. This Cereibacter sphaeroides (strain ATCC 17023 / DSM 158 / JCM 6121 / CCUG 31486 / LMG 2827 / NBRC 12203 / NCIMB 8253 / ATH 2.4.1.) (Rhodobacter sphaeroides) protein is Large ribosomal subunit protein bL9.